We begin with the raw amino-acid sequence, 943 residues long: 2-oxoglutarate dehydrogenase E1 component (943 aa).

Belongs to the alpha-ketoglutarate dehydrogenase family. Homodimer. Part of the 2-oxoglutarate dehydrogenase (OGDH) complex composed of E1 (2-oxoglutarate dehydrogenase), E2 (dihydrolipoamide succinyltransferase) and E3 (dihydrolipoamide dehydrogenase); the complex contains multiple copies of the three enzymatic components (E1, E2 and E3). The cofactor is thiamine diphosphate.

The enzyme catalyses N(6)-[(R)-lipoyl]-L-lysyl-[protein] + 2-oxoglutarate + H(+) = N(6)-[(R)-S(8)-succinyldihydrolipoyl]-L-lysyl-[protein] + CO2. E1 component of the 2-oxoglutarate dehydrogenase (OGDH) complex which catalyzes the decarboxylation of 2-oxoglutarate, the first step in the conversion of 2-oxoglutarate to succinyl-CoA and CO(2). The sequence is that of 2-oxoglutarate dehydrogenase E1 component (sucA) from Azotobacter vinelandii.